Reading from the N-terminus, the 206-residue chain is Superoxide dismutase [Mn] (206 aa).

H27, H82, D168, and H172 together coordinate Mn(2+).

It belongs to the iron/manganese superoxide dismutase family. Homodimer. The cofactor is Mn(2+).

The catalysed reaction is 2 superoxide + 2 H(+) = H2O2 + O2. In terms of biological role, destroys superoxide anion radicals which are normally produced within the cells and which are toxic to biological systems. This is Superoxide dismutase [Mn] (sodA) from Salmonella typhimurium (strain LT2 / SGSC1412 / ATCC 700720).